We begin with the raw amino-acid sequence, 436 residues long: tRNA(Ile)-lysidine synthase (436 aa).

21–26 lines the ATP pocket; the sequence is SGGVDS.

This sequence belongs to the tRNA(Ile)-lysidine synthase family.

Its subcellular location is the cytoplasm. The enzyme catalyses cytidine(34) in tRNA(Ile2) + L-lysine + ATP = lysidine(34) in tRNA(Ile2) + AMP + diphosphate + H(+). Ligates lysine onto the cytidine present at position 34 of the AUA codon-specific tRNA(Ile) that contains the anticodon CAU, in an ATP-dependent manner. Cytidine is converted to lysidine, thus changing the amino acid specificity of the tRNA from methionine to isoleucine. The chain is tRNA(Ile)-lysidine synthase from Aster yellows witches'-broom phytoplasma (strain AYWB).